A 599-amino-acid chain; its full sequence is Elongation factor 4 (599 aa).

In terms of domain architecture, tr-type G spans 4-185 (KNIRNFSIIA…VIIKKVPSPK (182 aa)). GTP-binding positions include 16 to 21 (DHGKST) and 132 to 135 (NKVD).

It belongs to the TRAFAC class translation factor GTPase superfamily. Classic translation factor GTPase family. LepA subfamily.

The protein resides in the cell membrane. The enzyme catalyses GTP + H2O = GDP + phosphate + H(+). In terms of biological role, required for accurate and efficient protein synthesis under certain stress conditions. May act as a fidelity factor of the translation reaction, by catalyzing a one-codon backward translocation of tRNAs on improperly translocated ribosomes. Back-translocation proceeds from a post-translocation (POST) complex to a pre-translocation (PRE) complex, thus giving elongation factor G a second chance to translocate the tRNAs correctly. Binds to ribosomes in a GTP-dependent manner. This chain is Elongation factor 4, found in Mycoplasmoides gallisepticum (strain R(low / passage 15 / clone 2)) (Mycoplasma gallisepticum).